A 143-amino-acid polypeptide reads, in one-letter code: Cell division protein SepF (143 aa).

The protein belongs to the SepF family. In terms of assembly, homodimer. Interacts with FtsZ.

It localises to the cytoplasm. Its function is as follows. Cell division protein that is part of the divisome complex and is recruited early to the Z-ring. Probably stimulates Z-ring formation, perhaps through the cross-linking of FtsZ protofilaments. Its function overlaps with FtsA. This Geobacillus thermodenitrificans (strain NG80-2) protein is Cell division protein SepF.